Consider the following 339-residue polypeptide: Serpentine receptor class delta-32 (339 aa).

7 consecutive transmembrane segments (helical) span residues 14–34, 45–65, 94–114, 128–148, 188–208, 237–257, and 269–289; these read AAVVSTLGIIFNGFLLFLIFF, VFLANTSITQLGYCICFLLTV, IFTTMLHFAVNSFLSIMLSMV, SGAFAMCILAYMIPLSMVVSI, LWVACCVSILCIPIYSVMFWC, ALTVQSLIPVFTLFPASLIFL, and FGYIIISLLSLSPTIDPLVTI.

This sequence belongs to the nematode receptor-like protein srd family.

The protein resides in the membrane. This chain is Serpentine receptor class delta-32 (srd-32), found in Caenorhabditis elegans.